Reading from the N-terminus, the 257-residue chain is MTTAVRGLLLALAFLTRLPVWWLGPPRREDHAASLPAYPVVGLILGILLLALYALLQWFFPDQFVVQAALLVAAWALVTGLLHLDGLGDSADAWLGGHGDRLRSLEIMKDPRSGPAAVAVITLALVVKVAALAALLRLDAALAALLIAPVLGRAAAALLIAGTPYARKQGLAGPLAEAPATRWIGLTALGALLFVTALAGWAGLAAVLGVVAVGVWAQHLMMRRLDGFTGDTAGALVEVAELAALLGLLAVLANSAG.

6 helical membrane-spanning segments follow: residues 4–24, 40–60, 64–84, 116–136, 140–160, and 193–213; these read AVRG…WWLG, VVGL…QWFF, FVVQ…LLHL, AAVA…AALL, AALA…ALLI, and LFVT…VVAV.

The protein belongs to the CobS family. Requires Mg(2+) as cofactor.

The protein resides in the cell inner membrane. It carries out the reaction alpha-ribazole + adenosylcob(III)inamide-GDP = adenosylcob(III)alamin + GMP + H(+). The enzyme catalyses alpha-ribazole 5'-phosphate + adenosylcob(III)inamide-GDP = adenosylcob(III)alamin 5'-phosphate + GMP + H(+). The protein operates within cofactor biosynthesis; adenosylcobalamin biosynthesis; adenosylcobalamin from cob(II)yrinate a,c-diamide: step 7/7. Joins adenosylcobinamide-GDP and alpha-ribazole to generate adenosylcobalamin (Ado-cobalamin). Also synthesizes adenosylcobalamin 5'-phosphate from adenosylcobinamide-GDP and alpha-ribazole 5'-phosphate. The sequence is that of Adenosylcobinamide-GDP ribazoletransferase from Alkalilimnicola ehrlichii (strain ATCC BAA-1101 / DSM 17681 / MLHE-1).